A 363-amino-acid chain; its full sequence is Cyanide hydratase (363 aa).

In terms of domain architecture, CN hydrolase spans 6-285 (YKAACVTSEP…DGLLFVDIDL (280 aa)). Catalysis depends on E46, which acts as the Proton acceptor. K128 is an active-site residue. C163 serves as the catalytic Nucleophile.

The protein belongs to the carbon-nitrogen hydrolase superfamily. Nitrilase family. Oligomer of dimers, forming left-handed helical fibers.

The catalysed reaction is formamide = hydrogen cyanide + H2O. Its function is as follows. Catalyzes the hydration of cyanide to formamide. Degradation of cyanide may be important for plant pathogenic fungi in infection of cyanogenic plants. The polypeptide is Cyanide hydratase (CyhAB) (Alternaria brassicicola (Dark leaf spot agent)).